We begin with the raw amino-acid sequence, 353 residues long: Stomatin-like protein 2, mitochondrial (353 aa).

The transit peptide at 1 to 28 directs the protein to the mitochondrion; the sequence is MLARAARGTGALLLRGSVQASGRIPRRA. Ser17 carries the post-translational modification Phosphoserine; by PKC/PRKCZ. Tyr124 is modified (phosphotyrosine). N6-acetyllysine; alternate is present on Lys145. Lys145 carries the N6-succinyllysine; alternate modification. A coiled-coil region spans residues 215–252; sequence INVAEGKKQAQILASEAEKAEQINQAAGEASAVLAKAK. Position 233 is an N6-acetyllysine (Lys233). Residues 324 to 353 are disordered; that stretch reads VPGAQNSSEARRDVQTTDTSIEELGRVKLS. The residue at position 330 (Ser330) is a Phosphoserine.

Belongs to the band 7/mec-2 family. Forms homooligomers. Interacts with MFN2; may form heterooligomers. Interacts with PHB1 and PHB2; recruits them to cardiolipin-enriched mitochondrial membranes and stabilizes them. Interacts with CACNA2D2.

The protein localises to the cell membrane. The protein resides in the mitochondrion. Its subcellular location is the mitochondrion inner membrane. It is found in the mitochondrion intermembrane space. It localises to the membrane raft. The protein localises to the cytoplasm. The protein resides in the cytoskeleton. In terms of biological role, mitochondrial protein that probably regulates the biogenesis and the activity of mitochondria. Stimulates cardiolipin biosynthesis, binds cardiolipin-enriched membranes where it recruits and stabilizes some proteins including prohibitin and may therefore act in the organization of functional microdomains in mitochondrial membranes. Through regulation of the mitochondrial function may play a role into several biological processes including cell migration, cell proliferation, T-cell activation, calcium homeostasis and cellular response to stress. May play a role in calcium homeostasis through negative regulation of calcium efflux from mitochondria. Required for mitochondrial hyperfusion a pro-survival cellular response to stress which results in increased ATP production by mitochondria. May also regulate the organization of functional domains at the plasma membrane and play a role in T-cell activation through association with the T-cell receptor signaling complex and its regulation. The protein is Stomatin-like protein 2, mitochondrial (Stoml2) of Rattus norvegicus (Rat).